Here is a 323-residue protein sequence, read N- to C-terminus: Cytochrome c biogenesis protein CcsA (323 aa).

8 helical membrane-spanning segments follow: residues 17-37, 44-64, 68-88, 98-118, 143-163, 229-249, 262-279, and 291-311; these read VVSI…IVGF, GMII…FFSG, FSDL…FYMV, LSTI…SGLL, MILG…ILVI, IISL…VWAN, ETWA…LHSR, and IVAS…NLLG.

Belongs to the CcmF/CycK/Ccl1/NrfE/CcsA family. May interact with Ccs1.

Its subcellular location is the plastid. It is found in the chloroplast thylakoid membrane. Functionally, required during biogenesis of c-type cytochromes (cytochrome c6 and cytochrome f) at the step of heme attachment. This Lotus japonicus (Lotus corniculatus var. japonicus) protein is Cytochrome c biogenesis protein CcsA.